A 497-amino-acid chain; its full sequence is Cytochrome P450 2D6 (497 aa).

Position 301 (Asp-301) interacts with substrate. Cys-443 provides a ligand contact to heme.

This sequence belongs to the cytochrome P450 family. The cofactor is heme.

It is found in the endoplasmic reticulum membrane. The protein resides in the microsome membrane. It carries out the reaction (5Z,8Z,11Z,14Z)-eicosatetraenoate + reduced [NADPH--hemoprotein reductase] + O2 = (8R,9S)-epoxy-(5Z,11Z,14Z)-eicosatrienoate + oxidized [NADPH--hemoprotein reductase] + H2O + H(+). The enzyme catalyses (5Z,8Z,11Z,14Z)-eicosatetraenoate + reduced [NADPH--hemoprotein reductase] + O2 = (11R,12S)-epoxy-(5Z,8Z,14Z)-eicosatrienoate + oxidized [NADPH--hemoprotein reductase] + H2O + H(+). The catalysed reaction is (5Z,8Z,11Z,14Z)-eicosatetraenoate + reduced [NADPH--hemoprotein reductase] + O2 = (14S,15R)-epoxy-(5Z,8Z,11Z)-eicosatrienoate + oxidized [NADPH--hemoprotein reductase] + H2O + H(+). It catalyses the reaction N-(5Z,8Z,11Z,14Z-eicosatetraenoyl)-ethanolamine + reduced [NADPH--hemoprotein reductase] + O2 = N-(8,9-epoxy-5Z,11Z,14Z-eicosatrienoyl)-ethanolamine + oxidized [NADPH--hemoprotein reductase] + H2O + H(+). It carries out the reaction N-(5Z,8Z,11Z,14Z-eicosatetraenoyl)-ethanolamine + reduced [NADPH--hemoprotein reductase] + O2 = N-(11,12-epoxy-5Z,8Z,14Z-eicosatrienoyl)-ethanolamine + oxidized [NADPH--hemoprotein reductase] + H2O + H(+). The enzyme catalyses N-(5Z,8Z,11Z,14Z-eicosatetraenoyl)-ethanolamine + reduced [NADPH--hemoprotein reductase] + O2 = N-(14,15-epoxy-5Z,8Z,11Z-eicosatrienoyl)-ethanolamine + oxidized [NADPH--hemoprotein reductase] + H2O + H(+). The catalysed reaction is N-(5Z,8Z,11Z,14Z-eicosatetraenoyl)-ethanolamine + reduced [NADPH--hemoprotein reductase] + O2 = N-(20-hydroxy-5Z,8Z,11Z,14Z-eicosatetraenoyl)-ethanolamine + oxidized [NADPH--hemoprotein reductase] + H2O + H(+). It catalyses the reaction (5Z,8Z,11Z,14Z,17Z)-eicosapentaenoate + reduced [NADPH--hemoprotein reductase] + O2 = (17S,18R)-epoxy-(5Z,8Z,11Z,14Z)-eicosatetraenoate + oxidized [NADPH--hemoprotein reductase] + H2O + H(+). It carries out the reaction (4Z,7Z,10Z,13Z,16Z,19Z)-docosahexaenoate + reduced [NADPH--hemoprotein reductase] + O2 = (19R,20S)-epoxy-(4Z,7Z,10Z,13Z,16Z)-docosapentaenoate + oxidized [NADPH--hemoprotein reductase] + H2O + H(+). The enzyme catalyses (4Z,7Z,10Z,13Z,16Z,19Z)-docosahexaenoate + reduced [NADPH--hemoprotein reductase] + O2 = (19S,20R)-epoxy-(4Z,7Z,10Z,13Z,16Z)-docosapentaenoate + oxidized [NADPH--hemoprotein reductase] + H2O + H(+). The catalysed reaction is cholesterol + reduced [NADPH--hemoprotein reductase] + O2 = 25-hydroxycholesterol + oxidized [NADPH--hemoprotein reductase] + H2O + H(+). It catalyses the reaction all-trans-retinol + reduced [NADPH--hemoprotein reductase] + O2 = all-trans-retinal + oxidized [NADPH--hemoprotein reductase] + 2 H2O + H(+). Its pathway is cofactor metabolism; retinol metabolism. It participates in lipid metabolism; fatty acid metabolism. The protein operates within steroid metabolism; cholesterol metabolism. A cytochrome P450 monooxygenase involved in the metabolism of fatty acids, steroids and retinoids. Mechanistically, uses molecular oxygen inserting one oxygen atom into a substrate, and reducing the second into a water molecule, with two electrons provided by NADPH via cytochrome P450 reductase (NADPH--hemoprotein reductase). Catalyzes the epoxidation of double bonds of polyunsaturated fatty acids (PUFA). Metabolizes endocannabinoid arachidonoylethanolamide (anandamide) to 20-hydroxyeicosatetraenoic acid ethanolamide (20-HETE-EA) and 8,9-, 11,12-, and 14,15-epoxyeicosatrienoic acid ethanolamides (EpETrE-EAs), potentially modulating endocannabinoid system signaling. Catalyzes the hydroxylation of carbon-hydrogen bonds. Metabolizes cholesterol toward 25-hydroxycholesterol, a physiological regulator of cellular cholesterol homeostasis. Catalyzes the oxidative transformations of all-trans retinol to all-trans retinal, a precursor for the active form all-trans-retinoic acid. Also involved in the oxidative metabolism of drugs such as antiarrhythmics, adrenoceptor antagonists, and tricyclic antidepressants. This chain is Cytochrome P450 2D6, found in Homo sapiens (Human).